A 257-amino-acid chain; its full sequence is Imidazole glycerol phosphate synthase subunit HisF (257 aa).

Residues Asp-12 and Asp-131 contribute to the active site.

The protein belongs to the HisA/HisF family. Heterodimer of HisH and HisF.

The protein resides in the cytoplasm. The catalysed reaction is 5-[(5-phospho-1-deoxy-D-ribulos-1-ylimino)methylamino]-1-(5-phospho-beta-D-ribosyl)imidazole-4-carboxamide + L-glutamine = D-erythro-1-(imidazol-4-yl)glycerol 3-phosphate + 5-amino-1-(5-phospho-beta-D-ribosyl)imidazole-4-carboxamide + L-glutamate + H(+). It participates in amino-acid biosynthesis; L-histidine biosynthesis; L-histidine from 5-phospho-alpha-D-ribose 1-diphosphate: step 5/9. In terms of biological role, IGPS catalyzes the conversion of PRFAR and glutamine to IGP, AICAR and glutamate. The HisF subunit catalyzes the cyclization activity that produces IGP and AICAR from PRFAR using the ammonia provided by the HisH subunit. The protein is Imidazole glycerol phosphate synthase subunit HisF of Marinomonas sp. (strain MWYL1).